The chain runs to 607 residues: UvrABC system protein C (607 aa).

The region spanning 16-94 is the GIY-YIG domain; the sequence is GRPGVYRMFD…IKEWRPPYNI (79 aa). Residues 203–238 enclose the UVR domain; the sequence is NALSDELNASMEKAAMALDFERAAELRDQVALLRRV.

It belongs to the UvrC family. As to quaternary structure, interacts with UvrB in an incision complex.

It is found in the cytoplasm. Its function is as follows. The UvrABC repair system catalyzes the recognition and processing of DNA lesions. UvrC both incises the 5' and 3' sides of the lesion. The N-terminal half is responsible for the 3' incision and the C-terminal half is responsible for the 5' incision. This Pseudomonas syringae pv. tomato (strain ATCC BAA-871 / DC3000) protein is UvrABC system protein C.